A 140-amino-acid chain; its full sequence is ATP synthase epsilon chain (140 aa).

Belongs to the ATPase epsilon chain family. As to quaternary structure, F-type ATPases have 2 components, CF(1) - the catalytic core - and CF(0) - the membrane proton channel. CF(1) has five subunits: alpha(3), beta(3), gamma(1), delta(1), epsilon(1). CF(0) has three main subunits: a, b and c.

It is found in the cell inner membrane. Produces ATP from ADP in the presence of a proton gradient across the membrane. This chain is ATP synthase epsilon chain, found in Chromobacterium violaceum (strain ATCC 12472 / DSM 30191 / JCM 1249 / CCUG 213 / NBRC 12614 / NCIMB 9131 / NCTC 9757 / MK).